The chain runs to 261 residues: Phosphatidylglycerol--prolipoprotein diacylglyceryl transferase (261 aa).

A run of 4 helical transmembrane segments spans residues 13 to 33 (LQIR…YWYI), 50 to 70 (VISW…ILFY), 86 to 106 (WNGG…MYIF), and 112 to 132 (IDVL…IFFG). A 1,2-diacyl-sn-glycero-3-phospho-(1'-sn-glycerol) is bound at residue R133. A run of 3 helical transmembrane segments spans residues 169 to 189 (LYEA…LFFF), 197 to 217 (GMLS…IEFV), and 232 to 252 (ITMG…FIKL).

It belongs to the Lgt family.

The protein localises to the cell inner membrane. The catalysed reaction is L-cysteinyl-[prolipoprotein] + a 1,2-diacyl-sn-glycero-3-phospho-(1'-sn-glycerol) = an S-1,2-diacyl-sn-glyceryl-L-cysteinyl-[prolipoprotein] + sn-glycerol 1-phosphate + H(+). Its pathway is protein modification; lipoprotein biosynthesis (diacylglyceryl transfer). Functionally, catalyzes the transfer of the diacylglyceryl group from phosphatidylglycerol to the sulfhydryl group of the N-terminal cysteine of a prolipoprotein, the first step in the formation of mature lipoproteins. The protein is Phosphatidylglycerol--prolipoprotein diacylglyceryl transferase of Ehrlichia canis (strain Jake).